Consider the following 130-residue polypeptide: Ion transport peptide (130 aa).

3 cysteine pairs are disulfide-bonded: C62/C98, C78/C94, and C81/C107. L127 bears the Leucine amide mark.

Belongs to the arthropod CHH/MIH/GIH/VIH hormone family. As to expression, brain and corpus cardiacum.

The protein localises to the secreted. In terms of biological role, stimulates salt and water reabsorption and inhibits acid secretion in the ileum of S.gregaria. The chain is Ion transport peptide from Schistocerca gregaria (Desert locust).